Reading from the N-terminus, the 376-residue chain is Acetylornithine aminotransferase (376 aa).

Pyridoxal 5'-phosphate is bound by residues 96–97 and F128; that span reads GT. R131 contributes to the N(2)-acetyl-L-ornithine binding site. 213-216 provides a ligand contact to pyridoxal 5'-phosphate; that stretch reads DEVQ. K242 is subject to N6-(pyridoxal phosphate)lysine. S270 is a binding site for N(2)-acetyl-L-ornithine. Pyridoxal 5'-phosphate is bound at residue T271.

This sequence belongs to the class-III pyridoxal-phosphate-dependent aminotransferase family. ArgD subfamily. As to quaternary structure, homodimer. It depends on pyridoxal 5'-phosphate as a cofactor.

It localises to the cytoplasm. It catalyses the reaction N(2)-acetyl-L-ornithine + 2-oxoglutarate = N-acetyl-L-glutamate 5-semialdehyde + L-glutamate. It participates in amino-acid biosynthesis; L-arginine biosynthesis; N(2)-acetyl-L-ornithine from L-glutamate: step 4/4. The chain is Acetylornithine aminotransferase from Aquifex aeolicus (strain VF5).